The chain runs to 186 residues: Potassium-transporting ATPase KdpC subunit (186 aa).

A helical transmembrane segment spans residues 10 to 30; the sequence is LTIITMVLCGFLFPLAITLIG.

Belongs to the KdpC family. As to quaternary structure, the system is composed of three essential subunits: KdpA, KdpB and KdpC.

The protein resides in the cell membrane. Its function is as follows. Part of the high-affinity ATP-driven potassium transport (or Kdp) system, which catalyzes the hydrolysis of ATP coupled with the electrogenic transport of potassium into the cytoplasm. This subunit acts as a catalytic chaperone that increases the ATP-binding affinity of the ATP-hydrolyzing subunit KdpB by the formation of a transient KdpB/KdpC/ATP ternary complex. The chain is Potassium-transporting ATPase KdpC subunit from Staphylococcus aureus (strain bovine RF122 / ET3-1).